A 200-amino-acid polypeptide reads, in one-letter code: Large ribosomal subunit protein uL22c (200 aa).

Belongs to the universal ribosomal protein uL22 family. In terms of assembly, part of the 50S ribosomal subunit.

The protein resides in the plastid. Its subcellular location is the chloroplast. Functionally, this protein binds specifically to 23S rRNA. In terms of biological role, the globular domain of the protein is located near the polypeptide exit tunnel on the outside of the subunit, while an extended beta-hairpin is found that lines the wall of the exit tunnel in the center of the 70S ribosome. This chain is Large ribosomal subunit protein uL22c (rpl22), found in Medicago sativa (Alfalfa).